Consider the following 265-residue polypeptide: Thiazole synthase (265 aa).

Lys103 acts as the Schiff-base intermediate with DXP in catalysis. 1-deoxy-D-xylulose 5-phosphate is bound by residues Gly164, 190–191 (AG), and 212–213 (NT).

This sequence belongs to the ThiG family. In terms of assembly, homotetramer. Forms heterodimers with either ThiH or ThiS.

It localises to the cytoplasm. It catalyses the reaction [ThiS sulfur-carrier protein]-C-terminal-Gly-aminoethanethioate + 2-iminoacetate + 1-deoxy-D-xylulose 5-phosphate = [ThiS sulfur-carrier protein]-C-terminal Gly-Gly + 2-[(2R,5Z)-2-carboxy-4-methylthiazol-5(2H)-ylidene]ethyl phosphate + 2 H2O + H(+). It participates in cofactor biosynthesis; thiamine diphosphate biosynthesis. In terms of biological role, catalyzes the rearrangement of 1-deoxy-D-xylulose 5-phosphate (DXP) to produce the thiazole phosphate moiety of thiamine. Sulfur is provided by the thiocarboxylate moiety of the carrier protein ThiS. In vitro, sulfur can be provided by H(2)S. The sequence is that of Thiazole synthase from Bordetella bronchiseptica (strain ATCC BAA-588 / NCTC 13252 / RB50) (Alcaligenes bronchisepticus).